Here is a 238-residue protein sequence, read N- to C-terminus: 2-phytyl-1,4-naphtoquinone methyltransferase (238 aa).

It belongs to the class I-like SAM-binding methyltransferase superfamily. MenG/UbiE family.

It catalyses the reaction demethylphylloquinol + S-adenosyl-L-methionine = phylloquinol + S-adenosyl-L-homocysteine + H(+). It functions in the pathway cofactor biosynthesis; phylloquinone biosynthesis. Functionally, methyltransferase required for the conversion of 2-phytyl-1,4-beta-naphthoquinol to phylloquinol. The sequence is that of 2-phytyl-1,4-naphtoquinone methyltransferase from Synechocystis sp. (strain ATCC 27184 / PCC 6803 / Kazusa).